The sequence spans 412 residues: F-box/WD repeat-containing protein 4 (412 aa).

Residues 25-71 (GPALWRLPEELLLLICSYLDMRALGRLAQVCRWLRRFTSCDLLWRRI) enclose the F-box domain. 6 WD repeats span residues 154–190 (RPLGVFAGHDEDVCHFVLANSHIVSAGGDGKIGIHKI), 193–229 (TFTVKYSAHEQEVNCVDCKGGIIVSGSRDRTAKVWPL), 236–277 (QCLH…IWDL), 283–321 (MTHLGSDFPPGAGVLDVMYESPFTLLSCGYDTYVRYWDL), 327–366 (KCVMEWEEPHDSTLYCLQTDGNHLLATGSSYYGVVRLWDR), and 373–409 (HAFPLTSTPLSSPVYCLRLTTKHLYAALSYNLHVLDF).

Part of a SCF (SKP1-cullin-F-box) protein ligase complex. Interacts with POUF51. In terms of tissue distribution, expressed in brain, kidney, lung and liver.

Probably recognizes and binds to some phosphorylated proteins and promotes their ubiquitination and degradation. Likely to be involved in key signaling pathways crucial for normal limb development. May participate in Wnt signaling. In Homo sapiens (Human), this protein is F-box/WD repeat-containing protein 4 (FBXW4).